We begin with the raw amino-acid sequence, 70 residues long: Small ribosomal subunit protein bS21 (70 aa).

This sequence belongs to the bacterial ribosomal protein bS21 family.

The chain is Small ribosomal subunit protein bS21 from Nitratidesulfovibrio vulgaris (strain ATCC 29579 / DSM 644 / CCUG 34227 / NCIMB 8303 / VKM B-1760 / Hildenborough) (Desulfovibrio vulgaris).